The sequence spans 74 residues: Peptide BmKb1 (74 aa).

An N-terminal signal peptide occupies residues 1-22; that stretch reads MEIKYLLTVFLVLLIVSDHCQA. Residue lysine 40 is modified to Lysine amide. A propeptide spanning residues 46-74 is cleaved from the precursor; that stretch reads DLNGYIDHFKNFRKRDAELEELLSKLPIY.

The protein belongs to the non-disulfide-bridged peptide (NDBP) superfamily. Short antimicrobial peptide (group 4) family. Expressed by the venom gland.

The protein resides in the secreted. It localises to the target cell membrane. Functionally, has antibacterial activity against Gram-positive bacteria S.aureus, M.luteus, B.subtilis, and Gram-negative bacteria E.coli, and P.aeruginosa. This is Peptide BmKb1 from Olivierus martensii (Manchurian scorpion).